We begin with the raw amino-acid sequence, 1476 residues long: Glucosyltransferase-I (1476 aa).

The signal sequence occupies residues 1–34 (MDKKVRYKLRKVKKRWVTVSVASAVMTLTTLSGG). Disordered stretches follow at residues 42–89 (ESKS…ISSS) and 102–141 (PYTV…TEAD). Polar residues-rich tracts occupy residues 43–81 (SKSQ…QTNH) and 102–139 (PYTV…QTTE). Cell wall-binding repeat units lie at residues 159–178 (LPNV…NGKV) and 179–199 (RTNF…TGAY). The interval 200–1051 (TDTSIDTVNK…NTYFNISDNK (852 aa)) is catalytic; approximate. Cell wall-binding repeat units lie at residues 1087–1106 (KNTF…NGYM), 1107–1126 (VTGA…NGLQ), 1170–1189 (SVGL…MGYQ), 1214–1234 (RNRF…DGAA), 1235–1254 (VTGS…NGVQ), 1279–1299 (RNRF…NGYA), 1300–1319 (VTGA…NGVQ), 1344–1364 (RNRF…NGYA), 1365–1384 (VTGA…NGVQ), 1409–1429 (RNRF…NGYA), and 1430–1449 (VTGA…NGVQ).

It belongs to the glycosyl hydrolase 70 family.

It localises to the secreted. It catalyses the reaction [(1-&gt;6)-alpha-D-glucosyl](n) + sucrose = [(1-&gt;6)-alpha-D-glucosyl](n+1) + D-fructose. Its function is as follows. Production of extracellular glucans, that are thought to play a key role in the development of the dental plaque because of their ability to adhere to smooth surfaces and mediate the aggregation of bacterial cells and food debris. The protein is Glucosyltransferase-I (gtfB) of Streptococcus mutans serotype c (strain ATCC 700610 / UA159).